The following is a 377-amino-acid chain: Chaperone protein DnaJ (377 aa).

Residues aspartate 5 to glycine 70 enclose the J domain. The segment at glycine 138–threonine 216 adopts a CR-type zinc-finger fold. Zn(2+) is bound by residues cysteine 151, cysteine 154, cysteine 168, cysteine 171, cysteine 190, cysteine 193, cysteine 204, and cysteine 207. CXXCXGXG motif repeat units lie at residues cysteine 151–glycine 158, cysteine 168–glycine 175, cysteine 190–glycine 197, and cysteine 204–glycine 211.

It belongs to the DnaJ family. In terms of assembly, homodimer. The cofactor is Zn(2+).

It localises to the cytoplasm. Its function is as follows. Participates actively in the response to hyperosmotic and heat shock by preventing the aggregation of stress-denatured proteins and by disaggregating proteins, also in an autonomous, DnaK-independent fashion. Unfolded proteins bind initially to DnaJ; upon interaction with the DnaJ-bound protein, DnaK hydrolyzes its bound ATP, resulting in the formation of a stable complex. GrpE releases ADP from DnaK; ATP binding to DnaK triggers the release of the substrate protein, thus completing the reaction cycle. Several rounds of ATP-dependent interactions between DnaJ, DnaK and GrpE are required for fully efficient folding. Also involved, together with DnaK and GrpE, in the DNA replication of plasmids through activation of initiation proteins. In Orientia tsutsugamushi (strain Ikeda) (Rickettsia tsutsugamushi), this protein is Chaperone protein DnaJ.